A 310-amino-acid chain; its full sequence is MTTSILDTYPQICSPNALPGTPGNLTKEQEEALLQFRSILLEKNYKERLDDSTLLRFLRARKFDINASVEMFVETERWREEYGANTIIEDYENNKEAEDKERIKLAKMYPQYYHHVDKDGRPLYFEELGGINLKKMYKITTEKQMLRNLVKEYELFATYRVPACSRRAGYLIETSCTVLDLKGISLSNAYHVLSYIKDVADISQNYYPERMGKFYIIHSPFGFSTMFKMVKPFLDPVTVSKIFILGSSYKKELLKQIPIENLPVKYGGTSVLHNPNDKFYYSDIGPWRDPRYIGPEGEIPNIFGKFTVTS.

A CRAL-TRIO domain is found at 101–274 (ERIKLAKMYP…KYGGTSVLHN (174 aa)).

This Saccharomyces cerevisiae (strain ATCC 204508 / S288c) (Baker's yeast) protein is CRAL-TRIO domain-containing protein YKL091C.